A 327-amino-acid chain; its full sequence is o-succinylbenzoate synthase (327 aa).

Lys110 acts as the Proton donor in catalysis. Positions 138, 165, and 188 each coordinate Mg(2+). Lys212 acts as the Proton acceptor in catalysis.

The protein belongs to the mandelate racemase/muconate lactonizing enzyme family. MenC type 1 subfamily. Requires a divalent metal cation as cofactor.

It carries out the reaction (1R,6R)-6-hydroxy-2-succinyl-cyclohexa-2,4-diene-1-carboxylate = 2-succinylbenzoate + H2O. Its pathway is quinol/quinone metabolism; 1,4-dihydroxy-2-naphthoate biosynthesis; 1,4-dihydroxy-2-naphthoate from chorismate: step 4/7. It participates in quinol/quinone metabolism; menaquinone biosynthesis. In terms of biological role, converts 2-succinyl-6-hydroxy-2,4-cyclohexadiene-1-carboxylate (SHCHC) to 2-succinylbenzoate (OSB). The chain is o-succinylbenzoate synthase from Mycobacterium ulcerans (strain Agy99).